We begin with the raw amino-acid sequence, 129 residues long: MAKTPTRSRKRVKKQVADGMAHVHASFNNTIITITDRQGNALAWATAGGSGFRGSRKSTPFAAQVAAERAGEMAKEYGLKNLEVFVNGPGPGRESSIRALNAVGYKITNITDVTPIPHNGCRPPKKRRV.

Belongs to the universal ribosomal protein uS11 family. As to quaternary structure, part of the 30S ribosomal subunit. Interacts with proteins S7 and S18. Binds to IF-3.

Functionally, located on the platform of the 30S subunit, it bridges several disparate RNA helices of the 16S rRNA. Forms part of the Shine-Dalgarno cleft in the 70S ribosome. This chain is Small ribosomal subunit protein uS11, found in Idiomarina loihiensis (strain ATCC BAA-735 / DSM 15497 / L2-TR).